A 195-amino-acid chain; its full sequence is uncharacterized protein (195 aa).

Disordered stretches follow at residues 1–54 (MPKG…SNKI) and 173–195 (LAGA…KPIS). The span at 7-20 (KPNEKKEELEKFAK) shows a compositional bias: basic and acidic residues. The segment covering 45 to 54 (QNDSSSSNKI) has biased composition (polar residues). Residues 48 to 97 (SSSSNKIVLSQAEKDLLRTELDKTEEEISTLKQVLSARQKHAAELKRKLG) are a coiled coil.

Belongs to the TPD52 family.

This is an uncharacterized protein from Caenorhabditis elegans.